The primary structure comprises 319 residues: ATP-dependent 6-phosphofructokinase (319 aa).

Gly11 lines the ATP pocket. 21–25 (RAVVR) serves as a coordination point for ADP. ATP contacts are provided by residues 72 to 73 (RC) and 102 to 105 (GDGS). Asp103 contacts Mg(2+). Substrate is bound at residue 125-127 (TID). Asp127 serves as the catalytic Proton acceptor. Arg154 is an ADP binding site. Residues Arg162 and 169–171 (MGR) each bind substrate. ADP contacts are provided by residues 185–187 (GAE), Arg211, and 213–215 (KKH). Substrate-binding positions include Glu222, Arg243, and 249-252 (HVQR).

This sequence belongs to the phosphofructokinase type A (PFKA) family. ATP-dependent PFK group I subfamily. Prokaryotic clade 'B1' sub-subfamily. As to quaternary structure, homotetramer. The cofactor is Mg(2+).

Its subcellular location is the cytoplasm. The enzyme catalyses beta-D-fructose 6-phosphate + ATP = beta-D-fructose 1,6-bisphosphate + ADP + H(+). Its pathway is carbohydrate degradation; glycolysis; D-glyceraldehyde 3-phosphate and glycerone phosphate from D-glucose: step 3/4. Its activity is regulated as follows. Allosterically activated by ADP and other diphosphonucleosides, and allosterically inhibited by phosphoenolpyruvate. Catalyzes the phosphorylation of D-fructose 6-phosphate to fructose 1,6-bisphosphate by ATP, the first committing step of glycolysis. This Bacillus cereus (strain B4264) protein is ATP-dependent 6-phosphofructokinase.